The sequence spans 232 residues: Large ribosomal subunit protein uL1 (232 aa).

This sequence belongs to the universal ribosomal protein uL1 family. Part of the 50S ribosomal subunit.

Its function is as follows. Binds directly to 23S rRNA. The L1 stalk is quite mobile in the ribosome, and is involved in E site tRNA release. Functionally, protein L1 is also a translational repressor protein, it controls the translation of the L11 operon by binding to its mRNA. The chain is Large ribosomal subunit protein uL1 from Alkaliphilus metalliredigens (strain QYMF).